The chain runs to 316 residues: MANLKEIRDRIVSVKNTRKITEAMRLVAAAKVRRAQDQVLKSRPFADKLARVLENIQSRVQFEAVDSPLLSKREVKSISLVCITADRGLCGGYNTNIIKKVEIRYAELVKQGYQPNLILVGKKAIGYFQNRKDRYVIKSTFKELEQVPTVKDSEGVTNEILAEFLSENSDRVEIIYTKFITLVSCAPVVQTLLPLDPQGIAEENDEIFRLTTKDSKLLVEKSNIEKSDSEKLPSDIVFEQSPDQLLDSLLPLYLQNQVLRALQESAASELACRMTAMNNASDNAKELASTLNLTYNKARQAAITQEILEVVGGSVV.

This sequence belongs to the ATPase gamma chain family. In terms of assembly, F-type ATPases have 2 components, CF(1) - the catalytic core - and CF(0) - the membrane proton channel. CF(1) has five subunits: alpha(3), beta(3), gamma(1), delta(1), epsilon(1). CF(0) has three main subunits: a, b and c.

It localises to the cellular thylakoid membrane. Its function is as follows. Produces ATP from ADP in the presence of a proton gradient across the membrane. The gamma chain is believed to be important in regulating ATPase activity and the flow of protons through the CF(0) complex. The chain is ATP synthase gamma chain from Prochlorococcus marinus (strain MIT 9301).